The following is a 265-amino-acid chain: Acetylglutamate kinase (265 aa).

Substrate-binding positions include 41-42 (GG), R63, and N156.

The protein belongs to the acetylglutamate kinase family. ArgB subfamily.

It is found in the cytoplasm. It catalyses the reaction N-acetyl-L-glutamate + ATP = N-acetyl-L-glutamyl 5-phosphate + ADP. It participates in amino-acid biosynthesis; L-arginine biosynthesis; N(2)-acetyl-L-ornithine from L-glutamate: step 2/4. In terms of biological role, catalyzes the ATP-dependent phosphorylation of N-acetyl-L-glutamate. This chain is Acetylglutamate kinase, found in Oceanobacillus iheyensis (strain DSM 14371 / CIP 107618 / JCM 11309 / KCTC 3954 / HTE831).